The primary structure comprises 228 residues: Small ribosomal subunit protein uS2 (228 aa).

The protein belongs to the universal ribosomal protein uS2 family.

This chain is Small ribosomal subunit protein uS2, found in Buchnera aphidicola subsp. Baizongia pistaciae (strain Bp).